The sequence spans 216 residues: uncharacterized protein (216 aa).

The S-adenosyl-L-methionine site is built by G56 and E77.

It belongs to the methyltransferase superfamily. YrrT family.

Could be a S-adenosyl-L-methionine-dependent methyltransferase. This is an uncharacterized protein from Alkaliphilus oremlandii (strain OhILAs) (Clostridium oremlandii (strain OhILAs)).